Reading from the N-terminus, the 333-residue chain is Complement C1q and tumor necrosis factor-related protein 9B (333 aa).

Residues 1 to 19 (MRIWWLLLAIEICTGNINS) form the signal peptide. 3 consecutive Collagen-like domains span residues 24-82 (RQGH…DGKV), 95-154 (GSPG…PGPM), and 155-191 (GPIG…GEKG). A disordered region spans residues 24–189 (RQGHPGIPGN…IRGWKGDRGE (166 aa)). Low complexity predominate over residues 26-40 (GHPGIPGNPGHNGLP). Composition is skewed to basic and acidic residues over residues 42–55 (RDGR…KGDA) and 69–88 (TSGE…KGIK). Residues 197–333 (LVLPKSAFTV…FTGFLLFSSQ (137 aa)) enclose the C1q domain.

As to quaternary structure, interacts with CTRP9A and ADIPOQ. Forms heterotrimers and heterooligomeric complexes with CTRP9A. Expressed at low levels. Not expressed in adipose tissues.

Its subcellular location is the secreted. Functionally, probable adipokine. Activates AMPK, AKT, and p44/42 MAPK signaling pathways. This is Complement C1q and tumor necrosis factor-related protein 9B (C1QTNF9B) from Homo sapiens (Human).